We begin with the raw amino-acid sequence, 163 residues long: Probable cyclic pyranopterin monophosphate synthase (163 aa).

The disordered stretch occupies residues 1–23; it reads MPDGDDDALTHTTADGDAQMVDV. Residues 80-82 and 116-117 each bind substrate; these read MCH and ME. Residue Asp-131 is part of the active site.

This sequence belongs to the MoaC family. Homohexamer; trimer of dimers.

It catalyses the reaction (8S)-3',8-cyclo-7,8-dihydroguanosine 5'-triphosphate = cyclic pyranopterin phosphate + diphosphate. Its pathway is cofactor biosynthesis; molybdopterin biosynthesis. Its function is as follows. Catalyzes the conversion of (8S)-3',8-cyclo-7,8-dihydroguanosine 5'-triphosphate to cyclic pyranopterin monophosphate (cPMP). This chain is Probable cyclic pyranopterin monophosphate synthase, found in Halobacterium salinarum (strain ATCC 29341 / DSM 671 / R1).